Here is a 121-residue protein sequence, read N- to C-terminus: Cell division protein FtsB (121 aa).

Topologically, residues 1 to 6 (MRNWRW) are cytoplasmic. A helical membrane pass occupies residues 7 to 24 (LLLVLAVLLAWLQYRFWF). Over 25-121 (GPGNSGEVMM…PEPVDPVDHP (97 aa)) the chain is Periplasmic. The stretch at 31-66 (EVMMLEAQVAHQTQDNEGLRQRNQALAAEVKDLKDG) forms a coiled coil. The disordered stretch occupies residues 98–121 (APASAEASAPAQQAPEPVDPVDHP). The segment covering 99 to 113 (PASAEASAPAQQAPE) has biased composition (low complexity).

It belongs to the FtsB family. In terms of assembly, part of a complex composed of FtsB, FtsL and FtsQ.

It is found in the cell inner membrane. In terms of biological role, essential cell division protein. May link together the upstream cell division proteins, which are predominantly cytoplasmic, with the downstream cell division proteins, which are predominantly periplasmic. This is Cell division protein FtsB from Xanthomonas axonopodis pv. citri (strain 306).